We begin with the raw amino-acid sequence, 287 residues long: Vesicle-associated protein 4-3 (287 aa).

Residues 1–14 (MALTEDKSDSDGRR) are compositionally biased toward basic and acidic residues. The segment at 1–45 (MALTEDKSDSDGRRWGKFKLPFRNSNSQAPSASSSSSMATSSSSV) is disordered. Over residues 25 to 45 (SNSQAPSASSSSSMATSSSSV) the composition is skewed to low complexity. The region spanning 99-221 (RLKLDPSAKL…EEQVMRVVFL (123 aa)) is the MSP domain.

Belongs to the VAMP-associated protein (VAP) (TC 9.B.17) family.

Functionally, may play a role in vesicle trafficking. In Arabidopsis thaliana (Mouse-ear cress), this protein is Vesicle-associated protein 4-3 (PVA43).